The following is a 351-amino-acid chain: Increased glyphosate resistance protein (351 aa).

Over residues 1–18 (MHREDDSTSTGRREERLS) the composition is skewed to basic and acidic residues. A disordered region spans residues 1 to 29 (MHREDDSTSTGRREERLSTGKGDSLQPGP).

Its function is as follows. Confers an increase in glyphosate resistance when expressed in E.coli. The chain is Increased glyphosate resistance protein from Pseudomonas sp. (strain PG2982).